The following is a 133-amino-acid chain: Small ribosomal subunit protein uS9 (133 aa).

The tract at residues 94–133 (SADNRKPLKTEGHLSRDPRAKERRKYGLKKARKAPQFSKR) is disordered. Positions 95-113 (ADNRKPLKTEGHLSRDPRA) are enriched in basic and acidic residues. Residues 114-133 (KERRKYGLKKARKAPQFSKR) show a composition bias toward basic residues.

The protein belongs to the universal ribosomal protein uS9 family.

In Synechococcus sp. (strain CC9605), this protein is Small ribosomal subunit protein uS9.